A 452-amino-acid polypeptide reads, in one-letter code: L-seryl-tRNA(Sec) selenium transferase (452 aa).

The residue at position 285 (Lys285) is an N6-(pyridoxal phosphate)lysine.

It belongs to the SelA family. The cofactor is pyridoxal 5'-phosphate.

The protein resides in the cytoplasm. The enzyme catalyses L-seryl-tRNA(Sec) + selenophosphate + H(+) = L-selenocysteinyl-tRNA(Sec) + phosphate. Its pathway is aminoacyl-tRNA biosynthesis; selenocysteinyl-tRNA(Sec) biosynthesis; selenocysteinyl-tRNA(Sec) from L-seryl-tRNA(Sec) (bacterial route): step 1/1. Its function is as follows. Converts seryl-tRNA(Sec) to selenocysteinyl-tRNA(Sec) required for selenoprotein biosynthesis. The polypeptide is L-seryl-tRNA(Sec) selenium transferase (Aquifex aeolicus (strain VF5)).